Here is a 966-residue protein sequence, read N- to C-terminus: RNA polymerase-associated protein RapA (966 aa).

The 175-residue stretch at 163 to 337 (EVGRRIAPRV…FARLHLLDPN (175 aa)) folds into the Helicase ATP-binding domain. 176-183 (DEVGLGKT) lines the ATP pocket. Positions 283–286 (DEAH) match the DEAH box motif. Positions 489-643 (RVDWLINLVK…TCPMGAILHE (155 aa)) constitute a Helicase C-terminal domain.

This sequence belongs to the SNF2/RAD54 helicase family. RapA subfamily. As to quaternary structure, interacts with the RNAP. Has a higher affinity for the core RNAP than for the holoenzyme. Its ATPase activity is stimulated by binding to RNAP.

Transcription regulator that activates transcription by stimulating RNA polymerase (RNAP) recycling in case of stress conditions such as supercoiled DNA or high salt concentrations. Probably acts by releasing the RNAP, when it is trapped or immobilized on tightly supercoiled DNA. Does not activate transcription on linear DNA. Probably not involved in DNA repair. This is RNA polymerase-associated protein RapA from Histophilus somni (strain 129Pt) (Haemophilus somnus).